A 103-amino-acid polypeptide reads, in one-letter code: Large ribosomal subunit protein bL21 (103 aa).

This sequence belongs to the bacterial ribosomal protein bL21 family. As to quaternary structure, part of the 50S ribosomal subunit. Contacts protein L20.

This protein binds to 23S rRNA in the presence of protein L20. In Rhodococcus jostii (strain RHA1), this protein is Large ribosomal subunit protein bL21.